Here is a 241-residue protein sequence, read N- to C-terminus: NAD(P)H-quinone oxidoreductase subunit K (241 aa).

Residues Cys-60, Cys-61, Cys-125, and Cys-156 each coordinate [4Fe-4S] cluster. The tract at residues 220–241 (SSQKEKITELPEKTEITNTEKD) is disordered. Basic and acidic residues predominate over residues 222 to 241 (QKEKITELPEKTEITNTEKD).

It belongs to the complex I 20 kDa subunit family. NDH-1 can be composed of about 15 different subunits; different subcomplexes with different compositions have been identified which probably have different functions. [4Fe-4S] cluster serves as cofactor.

It localises to the cellular thylakoid membrane. It carries out the reaction a plastoquinone + NADH + (n+1) H(+)(in) = a plastoquinol + NAD(+) + n H(+)(out). The enzyme catalyses a plastoquinone + NADPH + (n+1) H(+)(in) = a plastoquinol + NADP(+) + n H(+)(out). NDH-1 shuttles electrons from an unknown electron donor, via FMN and iron-sulfur (Fe-S) centers, to quinones in the respiratory and/or the photosynthetic chain. The immediate electron acceptor for the enzyme in this species is believed to be plastoquinone. Couples the redox reaction to proton translocation, and thus conserves the redox energy in a proton gradient. Cyanobacterial NDH-1 also plays a role in inorganic carbon-concentration. The protein is NAD(P)H-quinone oxidoreductase subunit K of Prochlorococcus marinus (strain MIT 9215).